The following is a 97-amino-acid chain: Exodeoxyribonuclease 7 small subunit (97 aa).

Residues 1-22 form a disordered region; the sequence is MAKTASPGATPPDNGTEPLPDN.

Belongs to the XseB family. As to quaternary structure, heterooligomer composed of large and small subunits.

It is found in the cytoplasm. The catalysed reaction is Exonucleolytic cleavage in either 5'- to 3'- or 3'- to 5'-direction to yield nucleoside 5'-phosphates.. In terms of biological role, bidirectionally degrades single-stranded DNA into large acid-insoluble oligonucleotides, which are then degraded further into small acid-soluble oligonucleotides. The sequence is that of Exodeoxyribonuclease 7 small subunit from Burkholderia ambifaria (strain MC40-6).